We begin with the raw amino-acid sequence, 76 residues long: Protein RALF-like 30 (76 aa).

The N-terminal stretch at 1–22 is a signal peptide; the sequence is MKAWVICLMVISIFMMIEPTLA. Cystine bridges form between Cys37-Cys46 and Cys66-Cys72.

It belongs to the plant rapid alkalinization factor (RALF) family.

It localises to the secreted. Cell signaling peptide that may regulate plant stress, growth, and development. Mediates a rapid alkalinization of extracellular space by mediating a transient increase in the cytoplasmic Ca(2+) concentration leading to a calcium-dependent signaling events through a cell surface receptor and a concomitant activation of some intracellular mitogen-activated protein kinases. The protein is Protein RALF-like 30 (RALFL30) of Arabidopsis thaliana (Mouse-ear cress).